The primary structure comprises 385 residues: Mitochondrial protein C2orf69 (385 aa).

The N-terminal 24 residues, 1–24 (MWGFRLLRSPPLLLLLPQLGIGNA), are a transit peptide targeting the mitochondrion.

The protein belongs to the C2orf69 family.

It is found in the mitochondrion matrix. In terms of biological role, may play a role in the respiratory chain. This Homo sapiens (Human) protein is Mitochondrial protein C2orf69 (C2orf69).